Reading from the N-terminus, the 677-residue chain is DNA ligase (677 aa).

NAD(+) is bound by residues 36-40, 85-86, and Glu122; these read DAEYD and SI. The N6-AMP-lysine intermediate role is filled by Lys124. The NAD(+) site is built by Arg145, Glu181, Lys298, and Lys322. Zn(2+)-binding residues include Cys416, Cys419, Cys434, and Cys440. The 78-residue stretch at 600 to 677 folds into the BRCT domain; the sequence is LTPRPLAGKT…DEAALRALLD (78 aa).

The protein belongs to the NAD-dependent DNA ligase family. LigA subfamily. Mg(2+) serves as cofactor. The cofactor is Mn(2+).

It catalyses the reaction NAD(+) + (deoxyribonucleotide)n-3'-hydroxyl + 5'-phospho-(deoxyribonucleotide)m = (deoxyribonucleotide)n+m + AMP + beta-nicotinamide D-nucleotide.. DNA ligase that catalyzes the formation of phosphodiester linkages between 5'-phosphoryl and 3'-hydroxyl groups in double-stranded DNA using NAD as a coenzyme and as the energy source for the reaction. It is essential for DNA replication and repair of damaged DNA. In Methylibium petroleiphilum (strain ATCC BAA-1232 / LMG 22953 / PM1), this protein is DNA ligase.